The chain runs to 590 residues: Phosphatidylserine decarboxylase proenzyme 1, mitochondrial (590 aa).

A mitochondrion-targeting transit peptide spans Met1–Phe59. Topologically, residues Ser60–Trp140 are mitochondrial matrix. Residues Trp141–Tyr159 form a helical membrane-spanning segment. Over Glu160–Val590 the chain is Mitochondrial intermembrane. Active-site charge relay system; for autoendoproteolytic cleavage activity residues include Asp260, His403, and Ser558. The Schiff-base intermediate with substrate; via pyruvic acid; for decarboxylase activity role is filled by Ser558. Ser558 is modified (pyruvic acid (Ser); by autocatalysis).

This sequence belongs to the phosphatidylserine decarboxylase family. PSD-B subfamily. Eukaryotic type I sub-subfamily. Heterodimer of a large membrane-associated beta subunit and a small pyruvoyl-containing alpha subunit. The cofactor is pyruvate. Post-translationally, is synthesized initially as an inactive proenzyme. Formation of the active enzyme involves a self-maturation process in which the active site pyruvoyl group is generated from an internal serine residue via an autocatalytic post-translational modification. Two non-identical subunits are generated from the proenzyme in this reaction, and the pyruvate is formed at the N-terminus of the alpha chain, which is derived from the carboxyl end of the proenzyme. The autoendoproteolytic cleavage occurs by a canonical serine protease mechanism, in which the side chain hydroxyl group of the serine supplies its oxygen atom to form the C-terminus of the beta chain, while the remainder of the serine residue undergoes an oxidative deamination to produce ammonia and the pyruvoyl prosthetic group on the alpha chain. During this reaction, the Ser that is part of the protease active site of the proenzyme becomes the pyruvoyl prosthetic group, which constitutes an essential element of the active site of the mature decarboxylase.

It localises to the mitochondrion inner membrane. It carries out the reaction a 1,2-diacyl-sn-glycero-3-phospho-L-serine + H(+) = a 1,2-diacyl-sn-glycero-3-phosphoethanolamine + CO2. It functions in the pathway phospholipid metabolism; phosphatidylethanolamine biosynthesis; phosphatidylethanolamine from CDP-diacylglycerol: step 2/2. Functionally, catalyzes the formation of phosphatidylethanolamine (PtdEtn) from phosphatidylserine (PtdSer). Plays a central role in phospholipid metabolism and in the interorganelle trafficking of phosphatidylserine. Important for virulence. This Candida albicans (strain SC5314 / ATCC MYA-2876) (Yeast) protein is Phosphatidylserine decarboxylase proenzyme 1, mitochondrial.